Here is a 242-residue protein sequence, read N- to C-terminus: Biosynthetic peptidoglycan transglycosylase (242 aa).

A helical membrane pass occupies residues 19–39 (ILAALAVFWGGGIALFSVVPV).

Belongs to the glycosyltransferase 51 family.

It is found in the cell inner membrane. It carries out the reaction [GlcNAc-(1-&gt;4)-Mur2Ac(oyl-L-Ala-gamma-D-Glu-L-Lys-D-Ala-D-Ala)](n)-di-trans,octa-cis-undecaprenyl diphosphate + beta-D-GlcNAc-(1-&gt;4)-Mur2Ac(oyl-L-Ala-gamma-D-Glu-L-Lys-D-Ala-D-Ala)-di-trans,octa-cis-undecaprenyl diphosphate = [GlcNAc-(1-&gt;4)-Mur2Ac(oyl-L-Ala-gamma-D-Glu-L-Lys-D-Ala-D-Ala)](n+1)-di-trans,octa-cis-undecaprenyl diphosphate + di-trans,octa-cis-undecaprenyl diphosphate + H(+). Its pathway is cell wall biogenesis; peptidoglycan biosynthesis. Peptidoglycan polymerase that catalyzes glycan chain elongation from lipid-linked precursors. The sequence is that of Biosynthetic peptidoglycan transglycosylase from Salmonella paratyphi B (strain ATCC BAA-1250 / SPB7).